The sequence spans 628 residues: Monoterpene synthase like 2, chloroplastic (628 aa).

Mg(2+)-binding residues include aspartate 379, aspartate 383, and aspartate 531. Residues 379–383 (DDIYD) carry the DDXXD motif motif.

This sequence belongs to the terpene synthase family. Tpsd subfamily. The cofactor is Mg(2+). Requires Mn(2+) as cofactor.

The protein resides in the plastid. It is found in the chloroplast. The protein operates within terpene metabolism; oleoresin biosynthesis. It functions in the pathway secondary metabolite biosynthesis; terpenoid biosynthesis. Its function is as follows. Monoterpene synthase (TPS) involved in the biosynthesis of monoterpene natural products included in conifer oleoresin secretions and volatile emissions; these compounds contribute to biotic and abiotic stress defense against herbivores and pathogens. This is Monoterpene synthase like 2, chloroplastic from Pinus banksiana (Jack pine).